The primary structure comprises 244 residues: MKIDLNADLGEGCASDAELLTLVSSANIACGFHAGDAQTMQASVREAVKNGVAIGAHPGFPDRENFGRTAMQLPPETVYAQTLYQIGALAAITHAEGGVMRHVKPHGMLYNQAAKEPQLADAIAKAVHACDPALILVGLAGSELIRAGKHYGLTTRQEVFADRGYQADGSLVPRSQPGALIEDEEQSLAQTLEMVQNGRVKSITGEWTPVEAQTVCLHGDGEHALAFARRLRAAFLERGIAVQA.

The protein belongs to the LamB/PxpA family. Forms a complex composed of PxpA, PxpB and PxpC.

The catalysed reaction is 5-oxo-L-proline + ATP + 2 H2O = L-glutamate + ADP + phosphate + H(+). Functionally, catalyzes the cleavage of 5-oxoproline to form L-glutamate coupled to the hydrolysis of ATP to ADP and inorganic phosphate. The chain is 5-oxoprolinase subunit A from Escherichia fergusonii (strain ATCC 35469 / DSM 13698 / CCUG 18766 / IAM 14443 / JCM 21226 / LMG 7866 / NBRC 102419 / NCTC 12128 / CDC 0568-73).